A 175-amino-acid polypeptide reads, in one-letter code: MRALFPGRFQPFHLGHLQVVKWLLDRYEELIIMIGSGQESHSPYNPFTAGERLVMVKESLAETGIDLRKVVIFPVMESFTSKNWIRIVEMYSPHFDVIISGNPLVYTVAKEAGYMVERVPMFNRDIYNATRIRKLIMENDLKWMECVPKSVSQFIRDIKGDERIRDVTKNDYTED.

This sequence belongs to the archaeal NMN adenylyltransferase family.

Its subcellular location is the cytoplasm. It catalyses the reaction beta-nicotinamide D-ribonucleotide + ATP + H(+) = diphosphate + NAD(+). It participates in cofactor biosynthesis; NAD(+) biosynthesis; NAD(+) from nicotinamide D-ribonucleotide: step 1/1. This is Nicotinamide-nucleotide adenylyltransferase 1 from Sulfolobus acidocaldarius (strain ATCC 33909 / DSM 639 / JCM 8929 / NBRC 15157 / NCIMB 11770).